A 264-amino-acid polypeptide reads, in one-letter code: Small ribosomal subunit protein uS3 (264 aa).

The KH type-2 domain maps to 39 to 107 (VREYLKKKLK…PVHVNIEEIR (69 aa)). Positions 217 to 264 (EEVAEEKRPRRNARPGDRRPRRDGEGAPAGARRGAPRRGGAGDGKTGE) are disordered. Residues 230–241 (RPGDRRPRRDGE) show a composition bias toward basic and acidic residues. The segment covering 253–264 (RRGGAGDGKTGE) has biased composition (gly residues).

It belongs to the universal ribosomal protein uS3 family. Part of the 30S ribosomal subunit. Forms a tight complex with proteins S10 and S14.

In terms of biological role, binds the lower part of the 30S subunit head. Binds mRNA in the 70S ribosome, positioning it for translation. The polypeptide is Small ribosomal subunit protein uS3 (Paraburkholderia phymatum (strain DSM 17167 / CIP 108236 / LMG 21445 / STM815) (Burkholderia phymatum)).